We begin with the raw amino-acid sequence, 104 residues long: Fusaric acid biosynthesis protein 2 (104 aa).

This sequence belongs to the YciI family.

The protein operates within mycotoxin biosynthesis. Its function is as follows. Part of the gene cluster that mediates the biosynthesis of fusaric acid, a mycotoxin with low to moderate toxicity to animals and humans, but with high phytotoxic properties. L-aspartate is suggested as fusaric acid amino acid precursor that is activated and further processed to O-acetyl-L-homoserine by cluster enzymes aspartate kinase FUB3 and homoserine O-acetyltransferase FUB5, as well as enzymes of the primary metabolism. The polyketide synthase (PKS) FUB1 generates the triketide trans-2-hexenal which is presumptively released by the hydrolase FUB4 and linked to the NRPS-bound amino acid precursor by NAD(P)-dependent dehydrogenase FUB6. FUB1, FUB4, and the non-canonical NRPS Fub8 may form an enzyme complex. Further processing of the NRPS-bound intermediate might be carried out by FUB6 and the sulfhydrylase FUB7, enabling a spontaneous electrocyclization to close the carbon backbone of fusaric acid. Dihydrofusaric acid is likely to be released via reduction by the thioester reductase (TR) domain of FUB8 whereupon the final oxidation to fusaric acid may (also) be performed by the FMN-dependent dehydrogenase FUB9. This is Fusaric acid biosynthesis protein 2 from Gibberella fujikuroi (strain CBS 195.34 / IMI 58289 / NRRL A-6831) (Bakanae and foot rot disease fungus).